Here is a 431-residue protein sequence, read N- to C-terminus: Putative serine/threonine-protein kinase A (431 aa).

The Protein kinase domain maps to Tyr20 to Ile279. ATP-binding positions include Val26 to Ala34 and Lys49. Asp147 acts as the Proton acceptor in catalysis. Positions Asp331–Gly429 constitute a PH domain.

This sequence belongs to the protein kinase superfamily. Ser/Thr protein kinase family.

The catalysed reaction is L-seryl-[protein] + ATP = O-phospho-L-seryl-[protein] + ADP + H(+). It carries out the reaction L-threonyl-[protein] + ATP = O-phospho-L-threonyl-[protein] + ADP + H(+). The sequence is that of Putative serine/threonine-protein kinase A (NRKA) from Trypanosoma brucei brucei.